Reading from the N-terminus, the 56-residue chain is Ovomucoid (56 aa).

Residues 6–56 form the Kazal-like domain; sequence VDCSEYPKPACTLEYVPICGSDNKTYGNKCNFCNAVVESNGTLTLSHFGKC. 3 disulfide bridges follow: Cys8-Cys38, Cys16-Cys35, and Cys24-Cys56. Asn45 is a glycosylation site (N-linked (GlcNAc...) asparagine).

The protein localises to the secreted. This is Ovomucoid from Cyrtonyx montezumae (Montezuma quail).